The primary structure comprises 423 residues: UDP-N-acetylglucosamine 1-carboxyvinyltransferase 2 (423 aa).

Residue 23–24 (KN) participates in phosphoenolpyruvate binding. R93 is a binding site for UDP-N-acetyl-alpha-D-glucosamine. Residue C117 is the Proton donor of the active site. At C117 the chain carries 2-(S-cysteinyl)pyruvic acid O-phosphothioketal. Residues 122–126 (RPIDQ), D305, and I327 each bind UDP-N-acetyl-alpha-D-glucosamine.

Belongs to the EPSP synthase family. MurA subfamily.

It localises to the cytoplasm. It catalyses the reaction phosphoenolpyruvate + UDP-N-acetyl-alpha-D-glucosamine = UDP-N-acetyl-3-O-(1-carboxyvinyl)-alpha-D-glucosamine + phosphate. It functions in the pathway cell wall biogenesis; peptidoglycan biosynthesis. In terms of biological role, cell wall formation. Adds enolpyruvyl to UDP-N-acetylglucosamine. The polypeptide is UDP-N-acetylglucosamine 1-carboxyvinyltransferase 2 (Listeria monocytogenes serotype 4b (strain F2365)).